The primary structure comprises 113 residues: MCLGKLYFEQLILVRCIKGRQSGNITTGESRCVSWNVYCTTSMIGLFSWRKMLLFQHFSYTQRENRQIGGKTWSLISSLFHLNETLASALHHPYETLALYEAYFALREKKFLL.

This is an uncharacterized protein from Saccharomyces cerevisiae (strain ATCC 204508 / S288c) (Baker's yeast).